Here is a 696-residue protein sequence, read N- to C-terminus: MIVGYSVFFHHTVTRRTWCAVTIFFCRQRNVNSAMIRAISIRWLLQRPGDKRHSAWLVARSKSLLVRNLSTTNQVKGETEEPSQADLLREFAHMPVERIRNFSIIAHVDHGKSTLADRLLELTGAIARNGGQHQVLDNLQVERERGITVKAQTASIFHRHKGQLYLLNLIDTPGHVDFSNEVSRSLAACDGVVLLVDACHGVQAQTVANYHLAKQRQLAVVPVLNKIDIKHANPDQVCQDLKLLFGIDPDEVLRVSAKLGTGVSEVLERVIETVPPPQVQRDSDFRALIFDSWFDKYRGALNLIYVLNGKLEQNQDIQSLATKKVYSVKSISVLRPAECPVPDVSAGQVGLIACNMRNSKESIVGDTIHLKNQAVAAAGSYRPQQPLVFAGVFPADQSKHVALRSAIDKMVLNDSAVTVKIDSSPALGQGWRLGFLGLLHMEVFCQRLEQEHGAEPIITAPSVTYRLVLSNPKMIKQQGRDTMDISNAALFPEPHSIKEYYEPLVLGTIITPTEYVGQVISLCVERRGLQQSSVNIDDTRVLMKYVLPLSEIILDFHDRLKSLSSGYASFSYEDHGYHPSHLVRLDIHLNGKPVEELCRIVHVSKATGVARQMVLKLRELIPKQMVQIAIQACVGSKVLARETIKAYRKDVTAKLYGGDVTRRMKLLKQQAEGKKKMRMFANIRVPHETFINVLKR.

A mitochondrion-targeting transit peptide spans 1–76 (MIVGYSVFFH…RNLSTTNQVK (76 aa)). The 182-residue stretch at 97 to 278 (ERIRNFSIIA…RVIETVPPPQ (182 aa)) folds into the tr-type G domain. Residues 106-113 (AHVDHGKS), 171-175 (DTPGH), and 225-228 (NKID) contribute to the GTP site.

It belongs to the TRAFAC class translation factor GTPase superfamily. Classic translation factor GTPase family. LepA subfamily.

The protein resides in the mitochondrion inner membrane. The catalysed reaction is GTP + H2O = GDP + phosphate + H(+). Its function is as follows. Promotes mitochondrial protein synthesis. May act as a fidelity factor of the translation reaction, by catalyzing a one-codon backward translocation of tRNAs on improperly translocated ribosomes. Binds to mitochondrial ribosomes in a GTP-dependent manner. The protein is Translation factor waclaw, mitochondrial of Drosophila melanogaster (Fruit fly).